The sequence spans 333 residues: Ketol-acid reductoisomerase (NADP(+)) (333 aa).

The 171-residue stretch at 1–171 folds into the KARI N-terminal Rossmann domain; sequence MSNDTQPKIA…GGARANIIKT (171 aa). Residues 14–17, Arg-37, Thr-42, and 72–75 contribute to the NADP(+) site; these read YGSQ and DMVQ. His-97 is an active-site residue. NADP(+) is bound at residue Gly-123. One can recognise a KARI C-terminal knotted domain in the interval 172 to 317; it reads TFKEETETDL…KKLRAKMVWL (146 aa). 4 residues coordinate Mg(2+): Asp-180, Glu-184, Glu-216, and Glu-220. Ser-241 lines the substrate pocket.

This sequence belongs to the ketol-acid reductoisomerase family. The cofactor is Mg(2+).

The enzyme catalyses (2R)-2,3-dihydroxy-3-methylbutanoate + NADP(+) = (2S)-2-acetolactate + NADPH + H(+). It carries out the reaction (2R,3R)-2,3-dihydroxy-3-methylpentanoate + NADP(+) = (S)-2-ethyl-2-hydroxy-3-oxobutanoate + NADPH + H(+). It functions in the pathway amino-acid biosynthesis; L-isoleucine biosynthesis; L-isoleucine from 2-oxobutanoate: step 2/4. Its pathway is amino-acid biosynthesis; L-valine biosynthesis; L-valine from pyruvate: step 2/4. Its function is as follows. Involved in the biosynthesis of branched-chain amino acids (BCAA). Catalyzes an alkyl-migration followed by a ketol-acid reduction of (S)-2-acetolactate (S2AL) to yield (R)-2,3-dihydroxy-isovalerate. In the isomerase reaction, S2AL is rearranged via a Mg-dependent methyl migration to produce 3-hydroxy-3-methyl-2-ketobutyrate (HMKB). In the reductase reaction, this 2-ketoacid undergoes a metal-dependent reduction by NADPH to yield (R)-2,3-dihydroxy-isovalerate. The protein is Ketol-acid reductoisomerase (NADP(+)) of Xanthomonas euvesicatoria pv. vesicatoria (strain 85-10) (Xanthomonas campestris pv. vesicatoria).